The primary structure comprises 36 residues: Mu/omega-theraphotoxin-Pmu1a (36 aa).

Cystine bridges form between cysteine 2–cysteine 16, cysteine 9–cysteine 21, and cysteine 15–cysteine 29.

The protein belongs to the neurotoxin 10 (Hwtx-1) family. As to expression, expressed by the venom gland.

The protein localises to the secreted. Functionally, gating-modifier toxin that targets both voltage-gated sodium and calcium channels, with described activities on human Nav1.7/SCN9A (IC(50)=5.5-7 nM), hNav1.6/SCN10A (IC(50)=9.9 nM), hNav1.4/SCN4A (IC(50)=62.9 nM), hCav3.2/CACNA1H (IC(50)=955.4 nM or 63.5% inhibition at 10 uM), hCav3.1/CACNA1G (95.1% inhibition at 10 uM), hCav3.3/CACNA1I (90.8% inhibition at 10 uM). Acts on Cav3 currents mainly by inducing a strong depolarizing shift in the current-voltage curve. The protein is Mu/omega-theraphotoxin-Pmu1a of Pterinochilus murinus (Mombasa golden starburst baboon spider).